A 280-amino-acid polypeptide reads, in one-letter code: Ribosomal RNA-processing protein 7 homolog A (280 aa).

The span at 1–10 shows a compositional bias: basic residues; the sequence is MVSRRKKRKA. Positions 1-24 are disordered; sequence MVSRRKKRKAGGHEESIPSPPGYS. In terms of domain architecture, RRM spans 59–159; that stretch reads RTLFILNVPP…SGIHKWISDY (101 aa). Residue S99 is modified to Phosphoserine.

This sequence belongs to the RRP7 family. Part of the small subunit (SSU) processome, composed of more than 70 proteins and the RNA chaperone small nucleolar RNA (snoRNA) U3. Interacts with NOL6; required for NOL6 localization to nucleolus.

The protein localises to the nucleus. Its subcellular location is the nucleolus. It localises to the cell projection. It is found in the cilium. The protein resides in the cytoplasm. The protein localises to the cytoskeleton. Its subcellular location is the microtubule organizing center. It localises to the centrosome. Its function is as follows. Nucleolar protein that is involved in ribosomal RNA (rRNA) processing. Also plays a role in primary cilia resorption, and cell cycle progression in neurogenesis and neocortex development. Part of the small subunit (SSU) processome, first precursor of the small eukaryotic ribosomal subunit. During the assembly of the SSU processome in the nucleolus, many ribosome biogenesis factors, an RNA chaperone and ribosomal proteins associate with the nascent pre-rRNA and work in concert to generate RNA folding, modifications, rearrangements and cleavage as well as targeted degradation of pre-ribosomal RNA by the RNA exosome. The protein is Ribosomal RNA-processing protein 7 homolog A (Rrp7a) of Mus musculus (Mouse).